Reading from the N-terminus, the 226-residue chain is Ribonuclease 3 (226 aa).

The 123-residue stretch at 6 to 128 (INRLQRKLGY…LIGGVFLDSD (123 aa)) folds into the RNase III domain. Glu41 provides a ligand contact to Mg(2+). Asp45 is an active-site residue. Residues Asp114 and Glu117 each coordinate Mg(2+). Glu117 is an active-site residue. Positions 155–225 (DPKTRLQEYL…AEQALKKLEL (71 aa)) constitute a DRBM domain.

The protein belongs to the ribonuclease III family. As to quaternary structure, homodimer. It depends on Mg(2+) as a cofactor.

The protein resides in the cytoplasm. The enzyme catalyses Endonucleolytic cleavage to 5'-phosphomonoester.. Its function is as follows. Digests double-stranded RNA. Involved in the processing of primary rRNA transcript to yield the immediate precursors to the large and small rRNAs (23S and 16S). Processes some mRNAs, and tRNAs when they are encoded in the rRNA operon. Processes pre-crRNA and tracrRNA of type II CRISPR loci if present in the organism. The polypeptide is Ribonuclease 3 (Escherichia coli O139:H28 (strain E24377A / ETEC)).